The following is a 365-amino-acid chain: DNA replication and repair protein RecF (365 aa).

An ATP-binding site is contributed by Gly-30–Thr-37.

It belongs to the RecF family.

The protein resides in the cytoplasm. In terms of biological role, the RecF protein is involved in DNA metabolism; it is required for DNA replication and normal SOS inducibility. RecF binds preferentially to single-stranded, linear DNA. It also seems to bind ATP. The polypeptide is DNA replication and repair protein RecF (Leptospira borgpetersenii serovar Hardjo-bovis (strain JB197)).